The chain runs to 180 residues: Phosphoribosylaminoimidazole carboxylase (180 aa).

6 residues coordinate substrate: Ser35, Asp38, Ser62, Lys65, Gly89, and Ser91.

Belongs to the AIR carboxylase family. Class II subfamily.

The enzyme catalyses 5-amino-1-(5-phospho-D-ribosyl)imidazole-4-carboxylate + H(+) = 5-amino-1-(5-phospho-beta-D-ribosyl)imidazole + CO2. The protein operates within purine metabolism; IMP biosynthesis via de novo pathway; 5-amino-1-(5-phospho-D-ribosyl)imidazole-4-carboxylate from 5-amino-1-(5-phospho-D-ribosyl)imidazole (carboxylase route): step 1/1. Its function is as follows. Catalyzes the reversible conversion of 5-aminoimidazole ribonucleotide (AIR) and CO(2) to 4-carboxy-5-aminoimidazole ribonucleotide (CAIR). In Archaeoglobus fulgidus (strain ATCC 49558 / DSM 4304 / JCM 9628 / NBRC 100126 / VC-16), this protein is Phosphoribosylaminoimidazole carboxylase.